The primary structure comprises 275 residues: Large ribosomal subunit protein uL2c (275 aa).

The segment at 225–256 (AMNAVDHPHGGGEGRSPIGRSQPSTPWGRPAL) is disordered.

Belongs to the universal ribosomal protein uL2 family. Part of the 50S ribosomal subunit.

The protein resides in the plastid. It localises to the chloroplast. This Cyanidium caldarium (Red alga) protein is Large ribosomal subunit protein uL2c (rpl2).